The chain runs to 73 residues: DNA-directed RNA polymerase subunit omega (73 aa).

It belongs to the RNA polymerase subunit omega family. As to quaternary structure, the RNAP catalytic core consists of 2 alpha, 1 beta, 1 beta' and 1 omega subunit. When a sigma factor is associated with the core the holoenzyme is formed, which can initiate transcription.

It catalyses the reaction RNA(n) + a ribonucleoside 5'-triphosphate = RNA(n+1) + diphosphate. Promotes RNA polymerase assembly. Latches the N- and C-terminal regions of the beta' subunit thereby facilitating its interaction with the beta and alpha subunits. The polypeptide is DNA-directed RNA polymerase subunit omega (Maridesulfovibrio salexigens (strain ATCC 14822 / DSM 2638 / NCIMB 8403 / VKM B-1763) (Desulfovibrio salexigens)).